We begin with the raw amino-acid sequence, 99 residues long: Aspartyl/glutamyl-tRNA(Asn/Gln) amidotransferase subunit C (99 aa).

Belongs to the GatC family. As to quaternary structure, heterotrimer of A, B and C subunits.

It carries out the reaction L-glutamyl-tRNA(Gln) + L-glutamine + ATP + H2O = L-glutaminyl-tRNA(Gln) + L-glutamate + ADP + phosphate + H(+). The catalysed reaction is L-aspartyl-tRNA(Asn) + L-glutamine + ATP + H2O = L-asparaginyl-tRNA(Asn) + L-glutamate + ADP + phosphate + 2 H(+). In terms of biological role, allows the formation of correctly charged Asn-tRNA(Asn) or Gln-tRNA(Gln) through the transamidation of misacylated Asp-tRNA(Asn) or Glu-tRNA(Gln) in organisms which lack either or both of asparaginyl-tRNA or glutaminyl-tRNA synthetases. The reaction takes place in the presence of glutamine and ATP through an activated phospho-Asp-tRNA(Asn) or phospho-Glu-tRNA(Gln). The protein is Aspartyl/glutamyl-tRNA(Asn/Gln) amidotransferase subunit C of Mycolicibacterium vanbaalenii (strain DSM 7251 / JCM 13017 / BCRC 16820 / KCTC 9966 / NRRL B-24157 / PYR-1) (Mycobacterium vanbaalenii).